We begin with the raw amino-acid sequence, 377 residues long: Protein-tyrosine sulfotransferase 2 (377 aa).

Topologically, residues 1–8 are cytoplasmic; the sequence is MRLSMRRA. A helical; Signal-anchor for type II membrane protein transmembrane segment spans residues 9–25; it reads LLAAGLALALVLAVHLG. The Lumenal portion of the chain corresponds to 26-377; that stretch reads QRVLECQAVL…NSTSSHLGSS (352 aa). Position 78–82 (78–82) interacts with 3'-phosphoadenylyl sulfate; the sequence is RSGTT. An intrachain disulfide couples cysteine 96 to cysteine 156. Glutamate 99 (proton donor/acceptor) is an active-site residue. Positions 101–105 are interaction with peptide substrate; the sequence is RIIPR. Arginine 183, serine 191, and arginine 195 together coordinate 3'-phosphoadenylyl sulfate. Cysteine 225 and cysteine 233 are disulfide-bonded. 3'-phosphoadenylyl sulfate contacts are provided by residues tyrosine 238, 285–294, and lysine 300; that span reads STDQVIKPVN. Asparagine 343 and asparagine 368 each carry an N-linked (GlcNAc...) asparagine glycan.

Belongs to the protein sulfotransferase family. As to quaternary structure, homodimer. Can also form heterodimers with TPST1. N-glycosylated.

Its subcellular location is the golgi apparatus membrane. The enzyme catalyses L-tyrosyl-[protein] + 3'-phosphoadenylyl sulfate = O-sulfo-L-tyrosine-[protein] + adenosine 3',5'-bisphosphate + H(+). Its function is as follows. Catalyzes the O-sulfation of tyrosine residues within acidic motifs of polypeptides, using 3'-phosphoadenylyl sulfate (PAPS) as cosubstrate. The polypeptide is Protein-tyrosine sulfotransferase 2 (TPST2) (Bos taurus (Bovine)).